A 291-amino-acid polypeptide reads, in one-letter code: 4-hydroxy-tetrahydrodipicolinate synthase (291 aa).

Thr-44 contributes to the pyruvate binding site. Tyr-132 (proton donor/acceptor) is an active-site residue. Lys-160 acts as the Schiff-base intermediate with substrate in catalysis. Ile-202 is a pyruvate binding site.

This sequence belongs to the DapA family. In terms of assembly, homotetramer; dimer of dimers.

It is found in the cytoplasm. It carries out the reaction L-aspartate 4-semialdehyde + pyruvate = (2S,4S)-4-hydroxy-2,3,4,5-tetrahydrodipicolinate + H2O + H(+). The protein operates within amino-acid biosynthesis; L-lysine biosynthesis via DAP pathway; (S)-tetrahydrodipicolinate from L-aspartate: step 3/4. Functionally, catalyzes the condensation of (S)-aspartate-beta-semialdehyde [(S)-ASA] and pyruvate to 4-hydroxy-tetrahydrodipicolinate (HTPA). The protein is 4-hydroxy-tetrahydrodipicolinate synthase of Zymomonas mobilis subsp. mobilis (strain ATCC 31821 / ZM4 / CP4).